A 109-amino-acid polypeptide reads, in one-letter code: Short-chain dehydrogenase/reductase homolog YusS (109 aa).

The protein belongs to the short-chain dehydrogenases/reductases (SDR) family.

The protein is Short-chain dehydrogenase/reductase homolog YusS (yusS) of Bacillus subtilis (strain 168).